Reading from the N-terminus, the 201-residue chain is uncharacterized protein (201 aa).

A signal peptide spans 1 to 28 (MMTFKNLRYGLSSSVVLAASLFSVLSYA).

The protein belongs to the fimbrial protein family.

It localises to the fimbrium. Its function is as follows. Part of the yadCKLM-htrE-yadVN fimbrial operon. Could contribute to adhesion to various surfaces in specific environmental niches. This is an uncharacterized protein from Escherichia coli (strain K12).